The following is a 1625-amino-acid chain: Nonribosomal peptide synthetase aclP (1625 aa).

The Carrier 1 domain maps to threonine 47–glutamate 123. Serine 84 is subject to O-(pantetheine 4'-phosphoryl)serine. Residues isoleucine 127 to serine 157 are disordered. The interval alanine 286–leucine 567 is condensation 1. Residues phenylalanine 614 to arginine 997 are adenylation. A Carrier 2 domain is found at serine 1096–leucine 1171. Serine 1131 carries the O-(pantetheine 4'-phosphoryl)serine modification. The segment at glutamate 1195–serine 1585 is condensation 2.

It belongs to the NRP synthetase family.

Its pathway is mycotoxin biosynthesis. In terms of biological role, nonribosomal peptide synthetase; part of the gene cluster that mediates the biosynthesis of aspirochlorine (or antibiotic A30641), an unusual halogenated spiro compound with distinctive antifungal properties due to selective inhibition of protein biosynthesis, and which is also active against bacteria, viruses, and murine tumor cells. The non-ribosomal peptide synthetase (NRPS) aclP is responsible the formation of the diketopiperazine (DKP) core from the condensation of 2 phenylalanine residues. One Phe residue is tailored into chlorotyrosine by hydroxylation and chlorination, whereas the second Phe undergoes an unprecedented C-C bond cleavage to be converted into glycine. After formation of the DKP, sulfur is incorporated into the DKP by conjugation with glutathione by aclG, followed by its stepwise degradation to the thiol by aclI, aclJ and aclK, and the dithiol oxidation by aclT. In addition, oxygenases (aclB, aclC, aclL and aclO) and O-methyltransferases (aclM and aclU) act as tailoring enzymes to produce the intermediate dechloroaspirochlorine. Ultimately, chlorination of dechloroaspirochlorine by the halogenase aclH is the last step in the aspirochlorine pathway. This Aspergillus oryzae (strain ATCC 42149 / RIB 40) (Yellow koji mold) protein is Nonribosomal peptide synthetase aclP.